A 282-amino-acid chain; its full sequence is Bis(5'-nucleosyl)-tetraphosphatase, symmetrical (282 aa).

This sequence belongs to the Ap4A hydrolase family. As to quaternary structure, monomer.

The enzyme catalyses P(1),P(4)-bis(5'-adenosyl) tetraphosphate + H2O = 2 ADP + 2 H(+). Its function is as follows. Hydrolyzes diadenosine 5',5'''-P1,P4-tetraphosphate to yield ADP. This is Bis(5'-nucleosyl)-tetraphosphatase, symmetrical from Escherichia coli O157:H7.